A 326-amino-acid chain; its full sequence is Interleukin-1-binding protein (326 aa).

An N-terminal signal peptide occupies residues 1–18; the sequence is MSILPVIFLSIFFYSSFV. Ig-like domains lie at 24 to 115, 122 to 212, and 221 to 322; these read PECI…LNLT, SNID…RIVK, and PSTM…KTVT. Cysteines 48 and 99 form a disulfide. 3 N-linked (GlcNAc...) asparagine; by host glycosylation sites follow: N80, N103, and N113. A disulfide bond links C143 and C194. N206 and N237 each carry an N-linked (GlcNAc...) asparagine; by host glycan. C242 and C309 are disulfide-bonded.

It belongs to the interleukin-1 receptor family. In terms of assembly, interacts with mouse Il1b.

It localises to the secreted. Its function is as follows. May reduce the host inflammatory response by interacting with inteleukin-1 beta (Il1b) and thus decreasing the association between IL1B and its cellular receptor. This chain is Interleukin-1-binding protein (OPG201), found in Vaccinia virus (strain Western Reserve) (VACV).